The chain runs to 55 residues: ATP synthase F(0) complex subunit 8 (55 aa).

Residues 8–24 form a helical membrane-spanning segment; sequence PWFMIMLMTWFTYSLLI.

Belongs to the ATPase protein 8 family. As to quaternary structure, component of the ATP synthase complex composed at least of ATP5F1A/subunit alpha, ATP5F1B/subunit beta, ATP5MC1/subunit c (homooctomer), MT-ATP6/subunit a, MT-ATP8/subunit 8, ATP5ME/subunit e, ATP5MF/subunit f, ATP5MG/subunit g, ATP5MK/subunit k, ATP5MJ/subunit j, ATP5F1C/subunit gamma, ATP5F1D/subunit delta, ATP5F1E/subunit epsilon, ATP5PF/subunit F6, ATP5PB/subunit b, ATP5PD/subunit d, ATP5PO/subunit OSCP. ATP synthase complex consists of a soluble F(1) head domain (subunits alpha(3) and beta(3)) - the catalytic core - and a membrane F(0) domain - the membrane proton channel (subunits c, a, 8, e, f, g, k and j). These two domains are linked by a central stalk (subunits gamma, delta, and epsilon) rotating inside the F1 region and a stationary peripheral stalk (subunits F6, b, d, and OSCP).

It localises to the mitochondrion membrane. Subunit 8, of the mitochondrial membrane ATP synthase complex (F(1)F(0) ATP synthase or Complex V) that produces ATP from ADP in the presence of a proton gradient across the membrane which is generated by electron transport complexes of the respiratory chain. ATP synthase complex consist of a soluble F(1) head domain - the catalytic core - and a membrane F(1) domain - the membrane proton channel. These two domains are linked by a central stalk rotating inside the F(1) region and a stationary peripheral stalk. During catalysis, ATP synthesis in the catalytic domain of F(1) is coupled via a rotary mechanism of the central stalk subunits to proton translocation. In vivo, can only synthesize ATP although its ATP hydrolase activity can be activated artificially in vitro. Part of the complex F(0) domain. In Coturnix japonica (Japanese quail), this protein is ATP synthase F(0) complex subunit 8.